The following is a 215-amino-acid chain: MRKRISAIIMTLFMVFMSCNNGGPELKSDEVAKSDGTVLDLAKVSKKIKEASAFAASVKEVETLVKSVDELAKAIGKKIKNDDDGFDTEANKNGSLLAGTLQLMFAVGTKLESLEKIAGISDEVRGKVIVVKTENTALITKLKGGDASLGKNDASDSDAKNAIDKSDVTGGKVRKSLFKLNTAVDALLKAAEGEVEAAIKELTAPVKVEKPSQNN.

An N-terminal signal peptide occupies residues 1 to 18; that stretch reads MRKRISAIIMTLFMVFMS. The N-palmitoyl cysteine moiety is linked to residue cysteine 19. Residue cysteine 19 is the site of S-diacylglycerol cysteine attachment.

Belongs to the variable small protein (Vsp) family.

It localises to the cell outer membrane. Its function is as follows. The Vlp and Vsp proteins are antigenically distinct proteins, only one vlp or vsp gene is transcriptionally active at any one time. Switching between these genes is a mechanism of host immune response evasion. This Borrelia hermsii protein is Variable small protein 6.